The chain runs to 317 residues: Melanocyte-stimulating hormone receptor (317 aa).

The Extracellular segment spans residues 1–37; that stretch reads MPMHGAQRKLLGSLNSTPTATSNLGLAANHTGAPCLE. Asn-29 carries N-linked (GlcNAc...) asparagine glycosylation. Residues 38–63 form a helical membrane-spanning segment; the sequence is VSIPDGLFLSLGLVSLVENVLVVAAI. Residues 64–72 are Cytoplasmic-facing; it reads AKNRNLHSS. The chain crosses the membrane as a helical span at residues 73 to 93; the sequence is MYCFICCLALSDLLVSGSNML. Topologically, residues 94–118 are extracellular; that stretch reads ETAVILLLEAGALATRTSAMQQLHN. A helical transmembrane segment spans residues 119 to 140; that stretch reads TIDVLTCSSMLCSLCFLGAIAV. Residues 141–163 are Cytoplasmic-facing; it reads DRYISIFYALRYHSIMTLPRAQR. Residues 164 to 183 traverse the membrane as a helical segment; the sequence is AIAAIWVASXLSSTLFITYY. At 184–191 the chain is on the extracellular side; sequence DHAAVLLC. A helical membrane pass occupies residues 192-211; sequence LVVFFLAMLVLMAVLYVHML. Topologically, residues 212-240 are cytoplasmic; that stretch reads ARACQHAHGIIRLHKRQTPAHQGFGLRGA. A helical transmembrane segment spans residues 241–266; the sequence is ATLTILLGIFFLCWGPFFLHLTLVVF. Topologically, residues 267 to 279 are extracellular; the sequence is CPQHLTCSCIFKN. Residues 280–300 traverse the membrane as a helical segment; sequence FKVFLTLIICNTIIDPLIYAF. Residues 301–317 are Cytoplasmic-facing; that stretch reads RSQELRRTLKEVLLCSW. Cys-315 carries S-palmitoyl cysteine lipidation.

The protein belongs to the G-protein coupled receptor 1 family. Interacts with MGRN1, but does not undergo MGRN1-mediated ubiquitination; this interaction competes with GNAS-binding and thus inhibits agonist-induced cAMP production. Interacts with OPN3; the interaction results in a decrease in MC1R-mediated cAMP signaling and ultimately a decrease in melanin production in melanocytes.

It is found in the cell membrane. In terms of biological role, receptor for MSH (alpha, beta and gamma) and ACTH. The activity of this receptor is mediated by G proteins which activate adenylate cyclase. Mediates melanogenesis, the production of eumelanin (black/brown) and phaeomelanin (red/yellow), via regulation of cAMP signaling in melanocytes. The sequence is that of Melanocyte-stimulating hormone receptor (MC1R) from Saguinus midas (Golden-handed tamarin).